A 188-amino-acid polypeptide reads, in one-letter code: GTP cyclohydrolase 1 (188 aa).

Zn(2+) is bound by residues Cys78, His81, and Cys150.

The protein belongs to the GTP cyclohydrolase I family. As to quaternary structure, toroid-shaped homodecamer, composed of two pentamers of five dimers.

It carries out the reaction GTP + H2O = 7,8-dihydroneopterin 3'-triphosphate + formate + H(+). It functions in the pathway cofactor biosynthesis; 7,8-dihydroneopterin triphosphate biosynthesis; 7,8-dihydroneopterin triphosphate from GTP: step 1/1. The chain is GTP cyclohydrolase 1 from Geobacillus kaustophilus (strain HTA426).